A 215-amino-acid polypeptide reads, in one-letter code: Large ribosomal subunit protein uL16 (215 aa).

Belongs to the universal ribosomal protein uL16 family. Component of the large ribosomal subunit.

It localises to the cytoplasm. In terms of biological role, component of the large ribosomal subunit. Plays a role in the formation of actively translating ribosomes. Plays a role in the embryonic brain development. This Danio rerio (Zebrafish) protein is Large ribosomal subunit protein uL16.